The chain runs to 396 residues: E3 ubiquitin-protein transferase MAEA (396 aa).

The interval 1 to 124 (MAVQESAAQL…AAASVWKRKR (124 aa)) is extracellular and involved in cell to cell contact. Phosphothreonine is present on threonine 28. One can recognise a LisH domain in the interval 121–153 (KRKRMDRMMVEHLLRCGYYNTAVKLARQSGIED). One can recognise a CTLH domain in the interval 159–216 (MFLTAKEVEESLERRETATCLAWCHDNKSRLRKMKSCLEFSLRIQEFIELIRQNKRLD). An RING-Gid-type zinc finger spans residues 314 to 381 (CPVCSRSLNK…QDDKVVCPRT (68 aa)).

In terms of assembly, identified in the CTLH complex that contains GID4, RANBP9 and/or RANBP10, MKLN1, MAEA, RMND5A (or alternatively its paralog RMND5B), GID8, ARMC8, WDR26 and YPEL5. Within this complex, MAEA, RMND5A (or alternatively its paralog RMND5B), GID8, WDR26, and RANBP9 and/or RANBP10 form the catalytic core, while GID4, MKLN1, ARMC8 and YPEL5 have ancillary roles. Interacts with F-actin. In terms of processing, autoubiquitinated as component of the CTLH E3 ubiquitin-protein ligase complex (in vitro).

Its subcellular location is the cytoplasm. It is found in the nucleus. It localises to the nucleoplasm. The protein localises to the nucleus matrix. The protein resides in the cell membrane. Its subcellular location is the cytoskeleton. It carries out the reaction S-ubiquitinyl-[E2 ubiquitin-conjugating enzyme]-L-cysteine + [acceptor protein]-L-lysine = [E2 ubiquitin-conjugating enzyme]-L-cysteine + N(6)-ubiquitinyl-[acceptor protein]-L-lysine.. Functionally, core component of the CTLH E3 ubiquitin-protein ligase complex that selectively accepts ubiquitin from UBE2H and mediates ubiquitination and subsequent proteasomal degradation of the transcription factor HBP1. MAEA and RMND5A are both required for catalytic activity of the CTLH E3 ubiquitin-protein ligase complex. MAEA is required for normal cell proliferation. The CTLH E3 ubiquitin-protein ligase complex is not required for the degradation of enzymes involved in gluconeogenesis, such as FBP1. Plays a role in erythroblast enucleation during erythrocyte maturation and in the development of mature macrophages. Mediates the attachment of erythroid cell to mature macrophages; this MAEA-mediated contact inhibits erythroid cell apoptosis. Participates in erythroblastic island formation, which is the functional unit of definitive erythropoiesis. Associates with F-actin to regulate actin distribution in erythroblasts and macrophages. May contribute to nuclear architecture and cells division events. The polypeptide is E3 ubiquitin-protein transferase MAEA (MAEA) (Pongo abelii (Sumatran orangutan)).